The sequence spans 429 residues: Kynureninase (429 aa).

Pyridoxal 5'-phosphate-binding positions include Leu109, Thr110, 137 to 140 (FPSD), Asp222, His225, and Tyr247. Position 248 is an N6-(pyridoxal phosphate)lysine (Lys248). The pyridoxal 5'-phosphate site is built by Trp278 and Asn306.

Belongs to the kynureninase family. In terms of assembly, homodimer. The cofactor is pyridoxal 5'-phosphate.

The enzyme catalyses L-kynurenine + H2O = anthranilate + L-alanine + H(+). It carries out the reaction 3-hydroxy-L-kynurenine + H2O = 3-hydroxyanthranilate + L-alanine + H(+). The protein operates within amino-acid degradation; L-kynurenine degradation; L-alanine and anthranilate from L-kynurenine: step 1/1. It participates in cofactor biosynthesis; NAD(+) biosynthesis; quinolinate from L-kynurenine: step 2/3. Catalyzes the cleavage of L-kynurenine (L-Kyn) and L-3-hydroxykynurenine (L-3OHKyn) into anthranilic acid (AA) and 3-hydroxyanthranilic acid (3-OHAA), respectively. The chain is Kynureninase from Salinispora tropica (strain ATCC BAA-916 / DSM 44818 / JCM 13857 / NBRC 105044 / CNB-440).